We begin with the raw amino-acid sequence, 440 residues long: Serine/threonine-protein kinase VRK1 (440 aa).

One can recognise a Protein kinase domain in the interval 37-317 (WKLGLPIGQG…LLEYTEKPLY (281 aa)). ATP contacts are provided by residues 43-51 (IGQGGFGCI) and Lys71. Lys71 is covalently cross-linked (Glycyl lysine isopeptide (Lys-Gly) (interchain with G-Cter in SUMO2)). The active-site Proton acceptor is the Asp177. Ser342 is subject to Phosphoserine; by PLK3. Ser376 bears the Phosphoserine mark. Thr378 carries the phosphothreonine modification. 2 stretches are compositionally biased toward polar residues: residues 379 to 391 (QVQE…SVES) and 398 to 410 (SMSQ…SSSD). The interval 379 to 440 (QVQEAAQTRS…GSRTRKKAQK (62 aa)) is disordered. The interval 387–393 (RSVESQG) is required for interaction with the nucleosome.

Belongs to the protein kinase superfamily. CK1 Ser/Thr protein kinase family. VRK subfamily. Interacts with HDAC1, KAT2B, SETDB1, KDM3A and KDM4A. Associates with the nucleosome through interactions with nucleosome DNA, histone H2A and histone H2B; the interaction with H2A and H2B is mediated by the nucleosome acidic patch, a cluster of negatively charged residues of H2A and H2B forming a cleft within the nucleosome core. In terms of processing, autophosphorylated at various serine and threonine residues. Autophosphorylation does not impair its ability to phosphorylate p53/TP53. Phosphorylation by PLK3 leads to induction of Golgi fragmentation during mitosis. Highly expressed in testis. Expressed in liver, kidney and muscle. Weakly expressed in thymus, bone marrow and spleen.

It is found in the nucleus. The protein localises to the cytoplasm. Its subcellular location is the cajal body. It carries out the reaction L-seryl-[protein] + ATP = O-phospho-L-seryl-[protein] + ADP + H(+). It catalyses the reaction L-threonyl-[protein] + ATP = O-phospho-L-threonyl-[protein] + ADP + H(+). With respect to regulation, active in presence of Mn(2+), Mg(2+) and Zn(2+), but is not functional with Ca(2+) or Cu(2+). Has a higher affinity for Mn(2+) than for Mg(2+). RAN inhibits its autophosphorylation and its ability to phosphorylate histone H3. In terms of biological role, serine/threonine kinase involved in the regulation of key cellular processes including the cell cycle, nuclear condensation, transcription regulation, and DNA damage response. Controls chromatin organization and remodeling by mediating phosphorylation of histone H3 on 'Thr-4' and histone H2AX (H2aXT4ph). It also phosphorylates KAT5 in response to DNA damage, promoting KAT5 association with chromatin and histone acetyltransferase activity. Is involved in the regulation of cell cycle progression of neural progenitors, and is required for proper cortical neuronal migration. Is involved in neurite elongation and branching in motor neurons, and has an essential role in Cajal bodies assembly, acting through COIL phosphorylation and the control of coilin degradation. Involved in Golgi disassembly during the cell cycle: following phosphorylation by PLK3 during mitosis, required to induce Golgi fragmentation. Phosphorylates BANF1: disrupts its ability to bind DNA, reduces its binding to LEM domain-containing proteins and causes its relocalization from the nucleus to the cytoplasm. Phosphorylates TP53BP1 and p53/TP53 on 'Thr-18', preventing the interaction between p53/TP53 and MDM2. Phosphorylates ATF2 which activates its transcriptional activity. Phosphorylates JUN. The polypeptide is Serine/threonine-protein kinase VRK1 (Mus musculus (Mouse)).